A 775-amino-acid polypeptide reads, in one-letter code: Ankyrin repeat and EF-hand domain-containing protein 1 (775 aa).

8 ANK repeats span residues 47–76 (DGLS…HPDV), 184–213 (TGRT…EVNA), 217–246 (DRHH…DMGL), 250–279 (DGNT…DLKW), 524–553 (TYKT…NVNA), 557–586 (FLWT…SIDA), 590–619 (NNST…KFQI), and 623–652 (KGHA…NLPK).

This Mus musculus (Mouse) protein is Ankyrin repeat and EF-hand domain-containing protein 1 (Ankef1).